Reading from the N-terminus, the 202-residue chain is Urease accessory protein UreE (202 aa).

The segment covering 171 to 188 (HHGHSHSHDHDHDHDHQH) has biased composition (basic and acidic residues). Residues 171 to 202 (HHGHSHSHDHDHDHDHQHGPGCTHGHRGHDHH) form a disordered region.

The protein belongs to the UreE family.

It localises to the cytoplasm. Functionally, involved in urease metallocenter assembly. Binds nickel. Probably functions as a nickel donor during metallocenter assembly. This is Urease accessory protein UreE from Burkholderia ambifaria (strain ATCC BAA-244 / DSM 16087 / CCUG 44356 / LMG 19182 / AMMD) (Burkholderia cepacia (strain AMMD)).